The primary structure comprises 361 residues: Porphobilinogen deaminase (361 aa).

Cys265 carries the post-translational modification S-(dipyrrolylmethanemethyl)cysteine. The segment at 341-361 (LPPSSNTPTPQPITPITTNNS) is disordered.

This sequence belongs to the HMBS family. Dipyrromethane serves as cofactor.

The catalysed reaction is 4 porphobilinogen + H2O = hydroxymethylbilane + 4 NH4(+). It participates in porphyrin-containing compound metabolism; protoporphyrin-IX biosynthesis; coproporphyrinogen-III from 5-aminolevulinate: step 2/4. In terms of biological role, tetrapolymerization of the monopyrrole PBG into the hydroxymethylbilane pre-uroporphyrinogen in several discrete steps. The sequence is that of Porphobilinogen deaminase (HEM3) from Debaryomyces hansenii (strain ATCC 36239 / CBS 767 / BCRC 21394 / JCM 1990 / NBRC 0083 / IGC 2968) (Yeast).